Consider the following 858-residue polypeptide: Tetratricopeptide repeat protein 7A (858 aa).

Phosphoserine is present on Ser-51. TPR repeat units follow at residues 121–157 (CEAMLILGKLHYVEGSYRDAISMYARAGIDDMSMENK), 177–210 (ERLPNSIASRFRLTEREEEVITCFERASWIAQVF), 414–447 (FHLWYQVALSMVACGKSAYAVSLLRECVKLRPSD), 497–531 (YSLQATDATLKSKQDELHRKALQTLERAQQLAPSD), 533–565 (QVILYVSLQLALVRQISSAMEQLQEALKVRKDD), and 566–599 (AHALHLLALLFSAQKHHQHALDVVNMAITEHPEN). Position 182 is a phosphoserine (Ser-182). Phosphoserine occurs at positions 647, 678, 679, and 690. Thr-693 carries the post-translational modification Phosphothreonine. TPR repeat units follow at residues 745-778 (HSVLYMRGRLAEVKGNLEEAKQLYKEALTVNPDG), 780-812 (RIMHSLGLMLSRLGHKSLAQKVLRDAVERQSTC), and 813-846 (HEAWQGLGEVLQAQGQNEAAVDCFLTALELEASS).

As to quaternary structure, component of a phosphatidylinositol 4-kinase (PI4K) complex, composed of PI4KA, EFR3 (EFR3A or EFR3B), TTC7 (TTC7A or TTC7B) and HYCC (HYCC1 or HYCC2). Interacts with PI4KA. Interaction with PI4KA is direct. Interacts with EFR3 (EFR3A or EFR3B), interaction is direct. Interacts with HYCC (HYCC1 or HYCC2), interaction is direct. Association with the PI4K complex is strongly reduced by TMEM150A. As to expression, expressed in epithelial cells of the intestine, thymus, and pancreas (at protein level).

It localises to the cytoplasm. Its subcellular location is the cell membrane. Its function is as follows. Component of a complex required to localize phosphatidylinositol 4-kinase (PI4K) to the plasma membrane. The complex acts as a regulator of phosphatidylinositol 4-phosphate (PtdIns(4)P) synthesis. In the complex, plays a central role in bridging PI4KA to EFR3B and HYCC1, via direct interactions. This chain is Tetratricopeptide repeat protein 7A, found in Homo sapiens (Human).